The chain runs to 107 residues: MEHGEILARLEATIAERRLGDPSASYVAKLNAKGLAKIAQKVGEEGTETVIAALAGDRKELVGEAADLIFHLMVLLSAKDVPFAEVLAELARREGTSGIAEKASRSN.

It belongs to the PRA-PH family.

The protein resides in the cytoplasm. It catalyses the reaction 1-(5-phospho-beta-D-ribosyl)-ATP + H2O = 1-(5-phospho-beta-D-ribosyl)-5'-AMP + diphosphate + H(+). Its pathway is amino-acid biosynthesis; L-histidine biosynthesis; L-histidine from 5-phospho-alpha-D-ribose 1-diphosphate: step 2/9. The chain is Phosphoribosyl-ATP pyrophosphatase from Novosphingobium aromaticivorans (strain ATCC 700278 / DSM 12444 / CCUG 56034 / CIP 105152 / NBRC 16084 / F199).